The sequence spans 349 residues: Probable dual-specificity RNA methyltransferase RlmN (349 aa).

The active-site Proton acceptor is the Glu94. One can recognise a Radical SAM core domain in the interval 100-324 (YKTHTSICLS…NKNNVNTTIR (225 aa)). Residues Cys107 and Cys335 are joined by a disulfide bond. [4Fe-4S] cluster-binding residues include Cys114, Cys118, and Cys121. S-adenosyl-L-methionine contacts are provided by residues 161–162 (GE), Ser193, 216–218 (SLH), and Asn292. The active-site S-methylcysteine intermediate is the Cys335.

The protein belongs to the radical SAM superfamily. RlmN family. It depends on [4Fe-4S] cluster as a cofactor.

The protein resides in the cytoplasm. The enzyme catalyses adenosine(2503) in 23S rRNA + 2 reduced [2Fe-2S]-[ferredoxin] + 2 S-adenosyl-L-methionine = 2-methyladenosine(2503) in 23S rRNA + 5'-deoxyadenosine + L-methionine + 2 oxidized [2Fe-2S]-[ferredoxin] + S-adenosyl-L-homocysteine. It carries out the reaction adenosine(37) in tRNA + 2 reduced [2Fe-2S]-[ferredoxin] + 2 S-adenosyl-L-methionine = 2-methyladenosine(37) in tRNA + 5'-deoxyadenosine + L-methionine + 2 oxidized [2Fe-2S]-[ferredoxin] + S-adenosyl-L-homocysteine. Specifically methylates position 2 of adenine 2503 in 23S rRNA and position 2 of adenine 37 in tRNAs. The protein is Probable dual-specificity RNA methyltransferase RlmN of Finegoldia magna (strain ATCC 29328 / DSM 20472 / WAL 2508) (Peptostreptococcus magnus).